A 101-amino-acid chain; its full sequence is Iron-sulfur cluster assembly protein CyaY (101 aa).

The protein belongs to the frataxin family.

In terms of biological role, involved in iron-sulfur (Fe-S) cluster assembly. May act as a regulator of Fe-S biogenesis. This is Iron-sulfur cluster assembly protein CyaY from Rickettsia akari (strain Hartford).